Reading from the N-terminus, the 196-residue chain is Potassium-transporting ATPase KdpC subunit (196 aa).

A helical membrane pass occupies residues 7-27 (PAIVSAGLFTVLLGLAYPLAV).

Belongs to the KdpC family. The system is composed of three essential subunits: KdpA, KdpB and KdpC.

It localises to the cell inner membrane. Functionally, part of the high-affinity ATP-driven potassium transport (or Kdp) system, which catalyzes the hydrolysis of ATP coupled with the electrogenic transport of potassium into the cytoplasm. This subunit acts as a catalytic chaperone that increases the ATP-binding affinity of the ATP-hydrolyzing subunit KdpB by the formation of a transient KdpB/KdpC/ATP ternary complex. The polypeptide is Potassium-transporting ATPase KdpC subunit (Caulobacter sp. (strain K31)).